Consider the following 555-residue polypeptide: Hydroxylamine reductase (555 aa).

Cys-5, Cys-8, Cys-17, and Cys-23 together coordinate [4Fe-4S] cluster. His-248, Glu-272, Cys-316, Cys-408, Cys-436, Cys-461, Glu-496, and Lys-498 together coordinate hybrid [4Fe-2O-2S] cluster. A Cysteine persulfide modification is found at Cys-408.

This sequence belongs to the HCP family. [4Fe-4S] cluster is required as a cofactor. The cofactor is hybrid [4Fe-2O-2S] cluster.

It is found in the cytoplasm. It carries out the reaction A + NH4(+) + H2O = hydroxylamine + AH2 + H(+). Its function is as follows. Catalyzes the reduction of hydroxylamine to form NH(3) and H(2)O. This is Hydroxylamine reductase from Natranaerobius thermophilus (strain ATCC BAA-1301 / DSM 18059 / JW/NM-WN-LF).